Here is a 339-residue protein sequence, read N- to C-terminus: Anthranilate phosphoribosyltransferase (339 aa).

Residues G81, 84–85, S89, 91–94, 109–117, and A121 contribute to the 5-phospho-alpha-D-ribose 1-diphosphate site; these read GD, NVST, and KHGNRALSS. Position 81 (G81) interacts with anthranilate. A Mg(2+)-binding site is contributed by S93. Anthranilate is bound at residue N112. R167 is an anthranilate binding site. Positions 226 and 227 each coordinate Mg(2+).

It belongs to the anthranilate phosphoribosyltransferase family. As to quaternary structure, homodimer. It depends on Mg(2+) as a cofactor.

It carries out the reaction N-(5-phospho-beta-D-ribosyl)anthranilate + diphosphate = 5-phospho-alpha-D-ribose 1-diphosphate + anthranilate. The protein operates within amino-acid biosynthesis; L-tryptophan biosynthesis; L-tryptophan from chorismate: step 2/5. In terms of biological role, catalyzes the transfer of the phosphoribosyl group of 5-phosphorylribose-1-pyrophosphate (PRPP) to anthranilate to yield N-(5'-phosphoribosyl)-anthranilate (PRA). This Rhodopseudomonas palustris (strain BisB18) protein is Anthranilate phosphoribosyltransferase.